The primary structure comprises 330 residues: tRNA-modifying protein YgfZ (330 aa).

Folate contacts are provided by Trp28 and Trp190.

The protein belongs to the tRNA-modifying YgfZ family.

The protein resides in the cytoplasm. In terms of biological role, folate-binding protein involved in regulating the level of ATP-DnaA and in the modification of some tRNAs. It is probably a key factor in regulatory networks that act via tRNA modification, such as initiation of chromosomal replication. The protein is tRNA-modifying protein YgfZ of Serratia proteamaculans (strain 568).